Consider the following 470-residue polypeptide: MTVQTFTPNQTTTLETAKKTIAEQSQNSQTTGNKIGFVSLGCPKNLVDSERILTQLRTEGYEIVNSYHDSDVVIVNTCGFIDSAVQESLDTIGEALKENGKVIVTGCLGAREDEIRQVHPNVLGITGPHAYQNVLEHVHQYAPKPAHNPFTSLVPDHGVKLTPKHYAYLKISEGCNHRCTFCIIPSMRGDLVSRPVGEIIGEAERLKNAGVKELLVISQDTSAYGVDTKHSLGFANGSPVRHNIKALSEELGKMGIWVRLHYVYPYPHVDEIIPLMAEGKVLPYLDIPFQHASPRVLKMMKRPGQAERTLERIKKWREICPELVIRSTFIVGFPGETEEDFQILLDWLKEAQLDRVGCFKYSPVEGAAANEIEDQIPEDVKQDRFERFMLVQQEISAAKLQKRIGSTMQVLIDEVDEEGAIGRTYADAPEIDGLVYLNGETNLKPGELVNVVIEHADEYDLWGSILHDAQ.

The MTTase N-terminal domain maps to 33 to 143 (NKIGFVSLGC…VLEHVHQYAP (111 aa)). Residues Cys-42, Cys-78, Cys-107, Cys-175, Cys-179, and Cys-182 each coordinate [4Fe-4S] cluster. One can recognise a Radical SAM core domain in the interval 161–398 (LTPKHYAYLK…MLVQQEISAA (238 aa)). In terms of domain architecture, TRAM spans 401-467 (QKRIGSTMQV…EYDLWGSILH (67 aa)).

It belongs to the methylthiotransferase family. RimO subfamily. The cofactor is [4Fe-4S] cluster.

Its subcellular location is the cytoplasm. The enzyme catalyses L-aspartate(89)-[ribosomal protein uS12]-hydrogen + (sulfur carrier)-SH + AH2 + 2 S-adenosyl-L-methionine = 3-methylsulfanyl-L-aspartate(89)-[ribosomal protein uS12]-hydrogen + (sulfur carrier)-H + 5'-deoxyadenosine + L-methionine + A + S-adenosyl-L-homocysteine + 2 H(+). In terms of biological role, catalyzes the methylthiolation of an aspartic acid residue of ribosomal protein uS12. The protein is Ribosomal protein uS12 methylthiotransferase RimO of Vibrio cholerae serotype O1 (strain ATCC 39315 / El Tor Inaba N16961).